Consider the following 429-residue polypeptide: Adenylosuccinate synthetase (429 aa).

GTP-binding positions include 12–18 (GDEGKGK) and 40–42 (GHT). Asp13 (proton acceptor) is an active-site residue. Mg(2+)-binding residues include Asp13 and Gly40. IMP contacts are provided by residues 13–16 (DEGK), 38–41 (NAGH), Thr128, Arg142, Gln223, Thr238, and Arg302. His41 functions as the Proton donor in the catalytic mechanism. Residue 298–304 (TVTGRPR) coordinates substrate. GTP-binding positions include Arg304, 330–332 (LLD), and 412–414 (SVG).

The protein belongs to the adenylosuccinate synthetase family. As to quaternary structure, homodimer. Mg(2+) serves as cofactor.

The protein localises to the cytoplasm. The enzyme catalyses IMP + L-aspartate + GTP = N(6)-(1,2-dicarboxyethyl)-AMP + GDP + phosphate + 2 H(+). Its pathway is purine metabolism; AMP biosynthesis via de novo pathway; AMP from IMP: step 1/2. Functionally, plays an important role in the de novo pathway of purine nucleotide biosynthesis. Catalyzes the first committed step in the biosynthesis of AMP from IMP. This is Adenylosuccinate synthetase from Lactobacillus helveticus (strain DPC 4571).